A 500-amino-acid chain; its full sequence is Mannan polymerase II complex ANP1 subunit (500 aa).

Topologically, residues 1–15 are cytoplasmic; it reads MKYNNRKLSFNPTTV. The helical; Signal-anchor for type II membrane protein transmembrane segment at 16–27 threads the bilayer; it reads SIAGTLLTVFFL. Residues 28–500 lie on the Lumenal side of the membrane; that stretch reads TRLVLSFFSI…VPLDFDPDRN (473 aa). A disordered region spans residues 424 to 500; the sequence is WSEEGDGSEL…VPLDFDPDRN (77 aa). Residues 446-467 are compositionally biased toward low complexity; sequence QQQQQQQQQQQQQQQQQQQQQQ. A compositionally biased stretch (basic and acidic residues) spans 489-500; that stretch reads KEVPLDFDPDRN.

It belongs to the ANP1/MMN9/VAN1 family. In terms of assembly, component of the M-Pol II complex composed of ANP1, MNN9, MNN10, MNN11 and HOC1.

It localises to the endoplasmic reticulum membrane. The protein localises to the golgi apparatus membrane. Functionally, involved in the organization of the secretory pathway. Required to maintain a functional Golgi apparatus. In terms of biological role, the M-Pol II complex possesses alpha-1,6-mannosyltransferase activity and is probably involved in the elongation of the mannan backbone of N-linked glycans on cell wall and periplasmic proteins. The sequence is that of Mannan polymerase II complex ANP1 subunit (ANP1) from Saccharomyces cerevisiae (strain ATCC 204508 / S288c) (Baker's yeast).